Consider the following 189-residue polypeptide: Elongation factor P (189 aa).

The protein belongs to the elongation factor P family.

The protein resides in the cytoplasm. The protein operates within protein biosynthesis; polypeptide chain elongation. Involved in peptide bond synthesis. Stimulates efficient translation and peptide-bond synthesis on native or reconstituted 70S ribosomes in vitro. Probably functions indirectly by altering the affinity of the ribosome for aminoacyl-tRNA, thus increasing their reactivity as acceptors for peptidyl transferase. This Pseudomonas entomophila (strain L48) protein is Elongation factor P.